The chain runs to 514 residues: uncharacterized protein (514 aa).

It to E.coli YjjI.

This is an uncharacterized protein from Haemophilus influenzae (strain ATCC 51907 / DSM 11121 / KW20 / Rd).